A 248-amino-acid polypeptide reads, in one-letter code: Biosynthetic peptidoglycan transglycosylase (248 aa).

A helical transmembrane segment spans residues 20 to 42 (WLRWLMAAPLLFAAASVLQVLIL).

Belongs to the glycosyltransferase 51 family.

The protein resides in the cell inner membrane. The catalysed reaction is [GlcNAc-(1-&gt;4)-Mur2Ac(oyl-L-Ala-gamma-D-Glu-L-Lys-D-Ala-D-Ala)](n)-di-trans,octa-cis-undecaprenyl diphosphate + beta-D-GlcNAc-(1-&gt;4)-Mur2Ac(oyl-L-Ala-gamma-D-Glu-L-Lys-D-Ala-D-Ala)-di-trans,octa-cis-undecaprenyl diphosphate = [GlcNAc-(1-&gt;4)-Mur2Ac(oyl-L-Ala-gamma-D-Glu-L-Lys-D-Ala-D-Ala)](n+1)-di-trans,octa-cis-undecaprenyl diphosphate + di-trans,octa-cis-undecaprenyl diphosphate + H(+). It functions in the pathway cell wall biogenesis; peptidoglycan biosynthesis. Peptidoglycan polymerase that catalyzes glycan chain elongation from lipid-linked precursors. This Xanthomonas euvesicatoria pv. vesicatoria (strain 85-10) (Xanthomonas campestris pv. vesicatoria) protein is Biosynthetic peptidoglycan transglycosylase.